We begin with the raw amino-acid sequence, 435 residues long: Envelope glycoprotein M (435 aa).

Residues 1-36 (MGTQKKGPRSEKVSPYDTTTPEVEALDHQMDTLNWR) lie on the Intravirion side of the membrane. Residues 37-57 (IWIIQVMMFTLGAVMLLATLI) form a helical membrane-spanning segment. At 58–111 (AASSEYTGIPCFYAAVVDYELFNATLDGGVWSGNRGGYSAPVLFLEPHSVVAFT) the chain is on the virion surface side. The chain crosses the membrane as a helical span at residues 112–132 (YYTALTAMAMAVYTLITAAII). Topologically, residues 133 to 155 (HRETKNQRVRQSSGVAWLVVDPT) are intravirion. Residues 156 to 176 (TLFWGLLSLWLLNAVVLLLAY) form a helical membrane-spanning segment. Over 177 to 178 (KQ) the chain is Virion surface. Residues 179-199 (IGVAATLYLGHFATSVIFTTY) traverse the membrane as a helical segment. At 200–233 (FCGRGKLDETNIKAVANLRQQSVFLYRLAGPTRA) the chain is on the intravirion side. Residues 234 to 254 (VFVNLMAALMAICILFVSLML) traverse the membrane as a helical segment. Over 255–265 (ELVVANHLHTG) the chain is Virion surface. The helical transmembrane segment at 266–288 (LWSSVSVAMSTFSTLSVVYLIVS) threads the bilayer. Residues 289–294 (ELILAH) lie on the Intravirion side of the membrane. The chain crosses the membrane as a helical span at residues 295–317 (YIHVLIGPSLGTLVACATLGTAA). The Virion surface segment spans residues 318–334 (HSYMDRLYDPISVQSPR). The chain crosses the membrane as a helical span at residues 335–355 (LIPTTRGTLACLAVFSVVMLL). Over 356 to 435 (LRLMRAYVYH…LYERSNSGWE (80 aa)) the chain is Intravirion.

Belongs to the herpesviridae glycoprotein M family. Interacts (via N-terminus) with gN (via N-terminus). The gM-gN heterodimer forms the gCII complex.

Its subcellular location is the virion membrane. It localises to the host Golgi apparatus. It is found in the host trans-Golgi network. The protein resides in the host endosome membrane. The protein localises to the host nucleus inner membrane. In terms of biological role, envelope glycoprotein important for virion assembly and egress. Plays a role in the correct incorporation of gH-gL into virion membrane. Directs the glycoprotein N (gN) to the host trans-Golgi network. This chain is Envelope glycoprotein M, found in Homo sapiens (Human).